The chain runs to 1068 residues: Target of Nesh-SH3 (1068 aa).

A signal peptide spans 1-21; sequence MLSSLGCLLLCGSITLALGNA. The N-linked (GlcNAc...) asparagine glycan is linked to Asn-37. Positions 116–214 constitute a Fibronectin type-III 1 domain; it reads KPLQLVVGTL…KIFNHKTVVG (99 aa). Disordered regions lie at residues 315-351 and 384-811; these read SKTPEVEKISARPTTVTPETVPRSTKPTTSSALDVSE and VFSS…SITD. Residues 326-339 show a composition bias toward low complexity; the sequence is RPTTVTPETVPRST. Residues 340–351 show a composition bias toward polar residues; that stretch reads KPTTSSALDVSE. Residues 447–462 are compositionally biased toward low complexity; sequence QPTTPAPQQTTSIPST. The segment covering 463–473 has biased composition (basic residues); that stretch reads PKRRPRPKPPR. The span at 482–499 shows a compositional bias: polar residues; sequence AGTITPKISKSPEPTWTT. The segment covering 532–544 has biased composition (pro residues); the sequence is RAPPKPKTSPRPR. Polar residues predominate over residues 562 to 574; that stretch reads PKTSPSPEVSYTT. 2 stretches are compositionally biased toward low complexity: residues 603–631 and 737–750; these read IPFIPMISPSPSQEELQTTLEETDQSTQE and PPLRSTPRPTGTPL. Residues 802–811 show a composition bias toward polar residues; sequence PDNSPCSITD. The Fibronectin type-III 2 domain occupies 833–926; it reads PPTNLTVVTV…NTVAFSTESA (94 aa).

As to quaternary structure, probably interacts with ABI3. In terms of tissue distribution, expressed in brain, heart, lung, liver, pancreas kidney and placenta.

Its subcellular location is the secreted. The sequence is that of Target of Nesh-SH3 from Homo sapiens (Human).